Reading from the N-terminus, the 886-residue chain is KH domain-containing protein hrpk-2 (886 aa).

A compositionally biased stretch (basic and acidic residues) spans 359-368 (DNHFYNDKDS). Residues 359-433 (DNHFYNDKDS…SHRKESACVD (75 aa)) form a disordered region. 2 stretches are compositionally biased toward basic residues: residues 369–388 (GKHHRHRHRSKNNKKHKKHY) and 415–425 (HERKKRQRSSH). KH domains lie at 698 to 761 (KETV…IEKI) and 775 to 839 (PGIF…AYLT).

The sequence is that of KH domain-containing protein hrpk-2 from Caenorhabditis elegans.